A 202-amino-acid chain; its full sequence is Proteasome subunit beta 1 (202 aa).

Met1 is a propeptide (removed in mature form; by autocatalysis). Thr2 (nucleophile) is an active-site residue.

It belongs to the peptidase T1B family. In terms of assembly, the 20S proteasome core is composed of 14 alpha and 14 beta subunits that assemble into four stacked heptameric rings, resulting in a barrel-shaped structure. The two inner rings, each composed of seven catalytic beta subunits, are sandwiched by two outer rings, each composed of seven alpha subunits. The catalytic chamber with the active sites is on the inside of the barrel. Has a gated structure, the ends of the cylinder being occluded by the N-termini of the alpha-subunits. Is capped at one or both ends by the proteasome regulatory ATPase, PAN.

Its subcellular location is the cytoplasm. It catalyses the reaction Cleavage of peptide bonds with very broad specificity.. The formation of the proteasomal ATPase PAN-20S proteasome complex, via the docking of the C-termini of PAN into the intersubunit pockets in the alpha-rings, triggers opening of the gate for substrate entry. Interconversion between the open-gate and close-gate conformations leads to a dynamic regulation of the 20S proteasome proteolysis activity. Its function is as follows. Component of the proteasome core, a large protease complex with broad specificity involved in protein degradation. This is Proteasome subunit beta 1 from Pyrobaculum arsenaticum (strain DSM 13514 / JCM 11321 / PZ6).